Consider the following 351-residue polypeptide: Methionine import ATP-binding protein MetN (351 aa).

The ABC transporter domain maps to 4–249; that stretch reads VQLDHVSVTF…PKAELTQKFV (246 aa). 41 to 48 is an ATP binding site; it reads GFSGAGKS.

It belongs to the ABC transporter superfamily. Methionine importer (TC 3.A.1.24) family. In terms of assembly, the complex is composed of two ATP-binding proteins (MetN), two transmembrane proteins (MetI) and a solute-binding protein (MetQ).

It is found in the cell membrane. The catalysed reaction is L-methionine(out) + ATP + H2O = L-methionine(in) + ADP + phosphate + H(+). The enzyme catalyses D-methionine(out) + ATP + H2O = D-methionine(in) + ADP + phosphate + H(+). Its function is as follows. Part of the ABC transporter complex MetNIQ involved in methionine import. Responsible for energy coupling to the transport system. In Lactobacillus delbrueckii subsp. bulgaricus (strain ATCC BAA-365 / Lb-18), this protein is Methionine import ATP-binding protein MetN.